Consider the following 161-residue polypeptide: Large ribosomal subunit protein uL15 (161 aa).

The tract at residues 1–50 is disordered; that stretch reads MKLSDIADNAGSRKKRMRIGRGIGSGKGKTGGRGGKGQTARSGVRINGFE. A compositionally biased stretch (gly residues) spans 21–37; the sequence is RGIGSGKGKTGGRGGKG.

The protein belongs to the universal ribosomal protein uL15 family. In terms of assembly, part of the 50S ribosomal subunit.

Binds to the 23S rRNA. The chain is Large ribosomal subunit protein uL15 from Nitrobacter winogradskyi (strain ATCC 25391 / DSM 10237 / CIP 104748 / NCIMB 11846 / Nb-255).